Here is a 327-residue protein sequence, read N- to C-terminus: 2-methoxy-6-polyprenyl-1,4-benzoquinol methylase, mitochondrial (327 aa).

The N-terminal 42 residues, 1–42, are a transit peptide targeting the mitochondrion; that stretch reads MAAPGSCALWSYCGRGWSRAMRGCQLLGLRSSWPGDLLSARL. S-adenosyl-L-methionine contacts are provided by residues threonine 117, aspartate 171, and 199 to 200; that span reads DA.

It belongs to the class I-like SAM-binding methyltransferase superfamily. MenG/UbiE family. As to quaternary structure, component of a multi-subunit COQ enzyme complex, composed of at least COQ3, COQ4, COQ5, COQ6, COQ7 and COQ9. Interacts with PYURF; the interaction is direct, stabilizes COQ5 protein and associates PYURF with COQ enzyme complex. As to expression, widely expressed, with highest levels in liver, lung, placenta and skeletal muscle.

The protein localises to the mitochondrion inner membrane. The catalysed reaction is 2-methoxy-6-(all-trans-decaprenyl)benzene-1,4-diol + S-adenosyl-L-methionine = 5-methoxy-2-methyl-3-(all-trans-decaprenyl)benzene-1,4-diol + S-adenosyl-L-homocysteine + H(+). It participates in cofactor biosynthesis; ubiquinone biosynthesis. Methyltransferase required for the conversion of 2-decaprenyl-6-methoxy-1,4-benzoquinol (DDMQH2) to 2-decaprenyl-3-methyl-6-methoxy-1,4-benzoquinol (DMQH2). This Homo sapiens (Human) protein is 2-methoxy-6-polyprenyl-1,4-benzoquinol methylase, mitochondrial.